Reading from the N-terminus, the 241-residue chain is 2-C-methyl-D-erythritol 4-phosphate cytidylyltransferase (241 aa).

Belongs to the IspD/TarI cytidylyltransferase family. IspD subfamily.

The catalysed reaction is 2-C-methyl-D-erythritol 4-phosphate + CTP + H(+) = 4-CDP-2-C-methyl-D-erythritol + diphosphate. Its pathway is isoprenoid biosynthesis; isopentenyl diphosphate biosynthesis via DXP pathway; isopentenyl diphosphate from 1-deoxy-D-xylulose 5-phosphate: step 2/6. Functionally, catalyzes the formation of 4-diphosphocytidyl-2-C-methyl-D-erythritol from CTP and 2-C-methyl-D-erythritol 4-phosphate (MEP). This is 2-C-methyl-D-erythritol 4-phosphate cytidylyltransferase from Shewanella denitrificans (strain OS217 / ATCC BAA-1090 / DSM 15013).